Here is a 92-residue protein sequence, read N- to C-terminus: Small ribosomal subunit protein uS19c (92 aa).

This sequence belongs to the universal ribosomal protein uS19 family.

The protein localises to the plastid. The protein resides in the chloroplast. In terms of biological role, protein S19 forms a complex with S13 that binds strongly to the 16S ribosomal RNA. The protein is Small ribosomal subunit protein uS19c of Draba nemorosa (Woodland whitlowgrass).